A 539-amino-acid polypeptide reads, in one-letter code: Monocarboxylate transporter 8 (539 aa).

The disordered stretch occupies residues 1–92; sequence MALQSQASEE…VETRGTARGF (92 aa). Position 2 is an N-acetylalanine (alanine 2). At 2 to 96 the chain is on the cytoplasmic side; the sequence is ALQSQASEEA…GTARGFQPPE (95 aa). The span at 31–41 shows a compositional bias: acidic residues; sequence PESEPEPEPEP. Pro residues predominate over residues 42–64; that stretch reads EPVPVPPPEPQPEPQPLPDPAPL. A helical membrane pass occupies residues 97 to 117; sequence GGFGWVVVFAATWCNGSIFGI. Residues 118 to 143 lie on the Extracellular side of the membrane; the sequence is HNSVGILYSMLLEEEKEKNRQVEFQA. Residues 144-164 traverse the membrane as a helical segment; sequence AWVGALAMGMIFFCSPIVSIF. The Cytoplasmic segment spans residues 165-171; that stretch reads TDRLGCR. The chain crosses the membrane as a helical span at residues 172 to 192; it reads ITATAGAAVAFIGLHTSSFTS. Residues 193–200 lie on the Extracellular side of the membrane; the sequence is SLSLRYFT. A helical transmembrane segment spans residues 201 to 221; that stretch reads YGILFGCGCSFAFQPSLVILG. Residues 222-229 are Cytoplasmic-facing; that stretch reads HYFQRRLG. The chain crosses the membrane as a helical span at residues 230 to 250; the sequence is LANGVVSAGSSIFSMSFPFLI. Topologically, residues 251–258 are extracellular; sequence RMLGDKIK. A helical membrane pass occupies residues 259–279; sequence LAQTFQVLSTFMFVLMLLSLT. At 280–322 the chain is on the cytoplasmic side; the sequence is YRPLLPSSQDTPSKRGVRTLHQRFLAQLRKYFNMRVFRQRTYR. The chain crosses the membrane as a helical span at residues 323–343; it reads IWAFGIAAAALGYFVPYVHLM. The Extracellular segment spans residues 344-356; it reads KYVEEEFSEIKET. The chain crosses the membrane as a helical span at residues 357-377; it reads WVLLVCIGATSGLGRLVSGHI. Residues 378–386 are Cytoplasmic-facing; that stretch reads SDSIPGLKK. The helical transmembrane segment at 387-407 threads the bilayer; that stretch reads IYLQVLSFLLLGLMSMMIPLC. Over 408–409 the chain is Extracellular; it reads RD. Residues 410–430 form a helical membrane-spanning segment; the sequence is FGGLIVVCLFLGLCDGFFITI. Residues 431–447 lie on the Cytoplasmic side of the membrane; it reads MAPIAFELVGPMQASQA. The chain crosses the membrane as a helical span at residues 448-468; that stretch reads IGYLLGMMALPMIAGPPIAGL. At 469–477 the chain is on the extracellular side; sequence LRNCFGDYH. The chain crosses the membrane as a helical span at residues 478–498; it reads VAFYFAGVPPIIGAVILFFVP. Residues 499–539 are Cytoplasmic-facing; sequence LMHQRMFKKEQRDSSKDKMLAPDPDPNGELLPGSPNPEEPI. Basic and acidic residues predominate over residues 508 to 518; the sequence is EQRDSSKDKML. The segment at 508 to 539 is disordered; that stretch reads EQRDSSKDKMLAPDPDPNGELLPGSPNPEEPI.

It belongs to the major facilitator superfamily. Monocarboxylate porter (TC 2.A.1.13) family. In terms of assembly, monomer. Homodimer. Homooligomer. Highly expressed in liver and heart. In adult brain tissue expression is largely confined to endothelial cells of the blood-brain barrier (at protein level).

Its subcellular location is the cell membrane. It is found in the apical cell membrane. The enzyme catalyses 3,3',5-triiodo-L-thyronine(out) = 3,3',5-triiodo-L-thyronine(in). The catalysed reaction is L-thyroxine(out) = L-thyroxine(in). It carries out the reaction 3,3',5'-triiodo-L-thyronine(out) = 3,3',5'-triiodo-L-thyronine(in). It catalyses the reaction 3,3'-diiodo-L-thyronine(out) = 3,3'-diiodo-L-thyronine(in). Its function is as follows. Specific thyroid hormone transmembrane transporter, that mediates both uptake and efflux of thyroid hormones across the cell membrane independently of pH or a Na(+) gradient. Major substrates are the iodothyronines T3 and T4 and to a lesser extent rT3 and 3,3-diiodothyronine (3,3'-T2). Acts as an important mediator of thyroid hormone transport, especially T3, through the blood-brain barrier. The sequence is that of Monocarboxylate transporter 8 (SLC16A2) from Homo sapiens (Human).